Here is a 155-residue protein sequence, read N- to C-terminus: Nuclear cap-binding protein subunit 2 (155 aa).

Residues Tyr-19, Tyr-42, 111–115 (RTDWD), 122–126 (RQYGR), and 132–133 (QV) each bind mRNA. In terms of domain architecture, RRM spans 39 to 117 (NTLYVGNLSF…RIIRTDWDAG (79 aa)). The segment at 122–155 (RQYGRGKSGGQVRDEYRQDYDPARGGYGKVVSRP) is disordered. The span at 133-143 (VRDEYRQDYDP) shows a compositional bias: basic and acidic residues.

It belongs to the RRM NCBP2 family. As to quaternary structure, component of the nuclear cap-binding complex (CBC), a heterodimer composed of ncbp1/cbp80 and ncbp2/cbp20 that interacts with m7GpppG-capped RNA.

The protein resides in the nucleus. Its subcellular location is the cytoplasm. Functionally, component of the cap-binding complex (CBC), which binds co-transcriptionally to the 5' cap of pre-mRNAs and is involved in various processes such as pre-mRNA splicing, translation regulation, nonsense-mediated mRNA decay, RNA-mediated gene silencing (RNAi) by microRNAs (miRNAs) and mRNA export. The CBC complex is involved in mRNA export from the nucleus, leading to the recruitment of the mRNA export machinery to the 5' end of mRNA and to mRNA export in a 5' to 3' direction through the nuclear pore. The CBC complex is also involved in mediating U snRNA and intronless mRNAs export from the nucleus. The CBC complex is essential for a pioneer round of mRNA translation, before steady state translation when the CBC complex is replaced by cytoplasmic cap-binding protein eIF4E. The pioneer round of mRNA translation mediated by the CBC complex plays a central role in nonsense-mediated mRNA decay (NMD), NMD only taking place in mRNAs bound to the CBC complex, but not on eIF4E-bound mRNAs. The CBC complex enhances NMD in mRNAs containing at least one exon-junction complex (EJC), promoting the interaction between upf1 and upf2. The CBC complex is also involved in 'failsafe' NMD, which is independent of the EJC complex, while it does not participate in Staufen-mediated mRNA decay (SMD). During cell proliferation, the CBC complex is also involved in microRNAs (miRNAs) biogenesis via its interaction with srrt/ars2, thereby being required for miRNA-mediated RNA interference. The CBC complex also acts as a negative regulator of parn, thereby acting as an inhibitor of mRNA deadenylation. In the CBC complex, ncbp2/cbp20 recognizes and binds capped RNAs (m7GpppG-capped RNA) but requires ncbp1/cbp80 to stabilize the movement of its N-terminal loop and lock the CBC into a high affinity cap-binding state with the cap structure. The conventional cap-binding complex with NCBP2 binds both small nuclear RNA (snRNA) and messenger (mRNA) and is involved in their export from the nucleus. This is Nuclear cap-binding protein subunit 2 (ncbp2) from Salmo salar (Atlantic salmon).